A 207-amino-acid polypeptide reads, in one-letter code: Large ribosomal subunit protein uL3 (207 aa).

The tract at residues 126–149 is disordered; it reads GPASHGSKKWHRRPGSIGQRKTPG.

The protein belongs to the universal ribosomal protein uL3 family. As to quaternary structure, part of the 50S ribosomal subunit. Forms a cluster with proteins L14 and L19.

In terms of biological role, one of the primary rRNA binding proteins, it binds directly near the 3'-end of the 23S rRNA, where it nucleates assembly of the 50S subunit. In Deinococcus geothermalis (strain DSM 11300 / CIP 105573 / AG-3a), this protein is Large ribosomal subunit protein uL3.